Reading from the N-terminus, the 393-residue chain is Formate-dependent phosphoribosylglycinamide formyltransferase (393 aa).

N(1)-(5-phospho-beta-D-ribosyl)glycinamide is bound by residues 22–23 and glutamate 82; that span reads EL. Residues arginine 114, lysine 155, 160–165, 195–198, and glutamate 203 contribute to the ATP site; these read SSGKGQ and EGFI. The 190-residue stretch at 119–308 folds into the ATP-grasp domain; the sequence is RLAAEELGLP…EFALHARAIL (190 aa). 2 residues coordinate Mg(2+): glutamate 267 and glutamate 279. Residues aspartate 286, lysine 356, and 363–364 each bind N(1)-(5-phospho-beta-D-ribosyl)glycinamide; that span reads RR.

This sequence belongs to the PurK/PurT family. As to quaternary structure, homodimer.

It catalyses the reaction N(1)-(5-phospho-beta-D-ribosyl)glycinamide + formate + ATP = N(2)-formyl-N(1)-(5-phospho-beta-D-ribosyl)glycinamide + ADP + phosphate + H(+). Its pathway is purine metabolism; IMP biosynthesis via de novo pathway; N(2)-formyl-N(1)-(5-phospho-D-ribosyl)glycinamide from N(1)-(5-phospho-D-ribosyl)glycinamide (formate route): step 1/1. In terms of biological role, involved in the de novo purine biosynthesis. Catalyzes the transfer of formate to 5-phospho-ribosyl-glycinamide (GAR), producing 5-phospho-ribosyl-N-formylglycinamide (FGAR). Formate is provided by PurU via hydrolysis of 10-formyl-tetrahydrofolate. The sequence is that of Formate-dependent phosphoribosylglycinamide formyltransferase from Azoarcus sp. (strain BH72).